The chain runs to 180 residues: Large ribosomal subunit protein uL6 (180 aa).

Belongs to the universal ribosomal protein uL6 family. Part of the 50S ribosomal subunit.

Functionally, this protein binds to the 23S rRNA, and is important in its secondary structure. It is located near the subunit interface in the base of the L7/L12 stalk, and near the tRNA binding site of the peptidyltransferase center. The polypeptide is Large ribosomal subunit protein uL6 (Clostridium kluyveri (strain NBRC 12016)).